The primary structure comprises 455 residues: Anaerobic glycerol-3-phosphate dehydrogenase subunit B (455 aa).

Belongs to the anaerobic G-3-P dehydrogenase subunit B family. As to quaternary structure, composed of a catalytic GlpA/B dimer and of membrane bound GlpC. It depends on FMN as a cofactor.

The catalysed reaction is a quinone + sn-glycerol 3-phosphate = dihydroxyacetone phosphate + a quinol. Its pathway is polyol metabolism; glycerol degradation via glycerol kinase pathway; glycerone phosphate from sn-glycerol 3-phosphate (anaerobic route): step 1/1. Functionally, conversion of glycerol 3-phosphate to dihydroxyacetone. Uses fumarate or nitrate as electron acceptor. In Aliivibrio fischeri (strain MJ11) (Vibrio fischeri), this protein is Anaerobic glycerol-3-phosphate dehydrogenase subunit B.